The chain runs to 538 residues: Cytochrome P450 734A4 (538 aa).

Residues 5–27 traverse the membrane as a helical segment; that stretch reads VAVAAAVLLLLHVAARVADAVWW. Cysteine 480 is a heme binding site.

This sequence belongs to the cytochrome P450 family. Requires heme as cofactor. Expressed in roots, shoot apex, leaf sheaths, leaf blades, internodes and panicles.

The protein localises to the membrane. Functionally, cytochrome P450 involved in brassinosteroids (BRs) inactivation and regulation of BRs homeostasis. Is a multifunctional and multisubstrate enzyme that controls the endogenous bioactive BR content both by direct inactivation of castasterone (CS) and by decreasing the levels of BR precursors. Catalyzes the oxidation of carbon 22 hydroxylated BR intermediates to produce C26 oxidized metabolites. The chain is Cytochrome P450 734A4 (CYP734A4) from Oryza sativa subsp. japonica (Rice).